The chain runs to 335 residues: UDP-N-acetylglucosamine--N-acetylmuramyl-(pentapeptide) pyrophosphoryl-undecaprenol N-acetylglucosamine transferase (335 aa).

Residues 9–11, N123, S176, and Q274 each bind UDP-N-acetyl-alpha-D-glucosamine; that span reads TGG.

It belongs to the glycosyltransferase 28 family. MurG subfamily.

The protein resides in the cell inner membrane. It catalyses the reaction di-trans,octa-cis-undecaprenyl diphospho-N-acetyl-alpha-D-muramoyl-L-alanyl-D-glutamyl-meso-2,6-diaminopimeloyl-D-alanyl-D-alanine + UDP-N-acetyl-alpha-D-glucosamine = di-trans,octa-cis-undecaprenyl diphospho-[N-acetyl-alpha-D-glucosaminyl-(1-&gt;4)]-N-acetyl-alpha-D-muramoyl-L-alanyl-D-glutamyl-meso-2,6-diaminopimeloyl-D-alanyl-D-alanine + UDP + H(+). It participates in cell wall biogenesis; peptidoglycan biosynthesis. Functionally, cell wall formation. Catalyzes the transfer of a GlcNAc subunit on undecaprenyl-pyrophosphoryl-MurNAc-pentapeptide (lipid intermediate I) to form undecaprenyl-pyrophosphoryl-MurNAc-(pentapeptide)GlcNAc (lipid intermediate II). The sequence is that of UDP-N-acetylglucosamine--N-acetylmuramyl-(pentapeptide) pyrophosphoryl-undecaprenol N-acetylglucosamine transferase from Campylobacter fetus subsp. fetus (strain 82-40).